The following is a 217-amino-acid chain: Protein GrpE (217 aa).

Belongs to the GrpE family. As to quaternary structure, homodimer.

The protein localises to the cytoplasm. Its function is as follows. Participates actively in the response to hyperosmotic and heat shock by preventing the aggregation of stress-denatured proteins, in association with DnaK and GrpE. It is the nucleotide exchange factor for DnaK and may function as a thermosensor. Unfolded proteins bind initially to DnaJ; upon interaction with the DnaJ-bound protein, DnaK hydrolyzes its bound ATP, resulting in the formation of a stable complex. GrpE releases ADP from DnaK; ATP binding to DnaK triggers the release of the substrate protein, thus completing the reaction cycle. Several rounds of ATP-dependent interactions between DnaJ, DnaK and GrpE are required for fully efficient folding. This is Protein GrpE from Mycoplasma genitalium (strain ATCC 33530 / DSM 19775 / NCTC 10195 / G37) (Mycoplasmoides genitalium).